A 342-amino-acid chain; its full sequence is tRNA-specific 2-thiouridylase MnmA (342 aa).

Residues 6 to 13 (GMSGGVDS) and leucine 32 each bind ATP. Cysteine 99 functions as the Nucleophile in the catalytic mechanism. Residues cysteine 99 and cysteine 190 are joined by a disulfide bond. Glycine 124 lines the ATP pocket. The interval 140–142 (KDQ) is interaction with tRNA. Cysteine 190 functions as the Cysteine persulfide intermediate in the catalytic mechanism. The interval 292-293 (RY) is interaction with tRNA.

Belongs to the MnmA/TRMU family.

The protein resides in the cytoplasm. The enzyme catalyses S-sulfanyl-L-cysteinyl-[protein] + uridine(34) in tRNA + AH2 + ATP = 2-thiouridine(34) in tRNA + L-cysteinyl-[protein] + A + AMP + diphosphate + H(+). Catalyzes the 2-thiolation of uridine at the wobble position (U34) of tRNA, leading to the formation of s(2)U34. This is tRNA-specific 2-thiouridylase MnmA from Hydrogenobaculum sp. (strain Y04AAS1).